The sequence spans 211 residues: Urease accessory protein UreG (211 aa).

16–23 is a binding site for GTP; sequence GPVGSGKT.

It belongs to the SIMIBI class G3E GTPase family. UreG subfamily. As to quaternary structure, homodimer. UreD, UreF and UreG form a complex that acts as a GTP-hydrolysis-dependent molecular chaperone, activating the urease apoprotein by helping to assemble the nickel containing metallocenter of UreC. The UreE protein probably delivers the nickel.

The protein resides in the cytoplasm. Functionally, facilitates the functional incorporation of the urease nickel metallocenter. This process requires GTP hydrolysis, probably effectuated by UreG. This is Urease accessory protein UreG from Janthinobacterium sp. (strain Marseille) (Minibacterium massiliensis).